Here is a 347-residue protein sequence, read N- to C-terminus: Probable replication factor C subunit 5 (347 aa).

Position 64–71 (64–71 (GPPGTGKT)) interacts with ATP.

The protein belongs to the activator 1 small subunits family. In terms of assembly, heteropentamer of various rfc subunits that forms a complex (RFC) with PCNA in the presence of ATP.

It localises to the nucleus. In terms of biological role, the elongation of primed DNA templates by DNA polymerase delta and epsilon requires the action of the accessory proteins PCNA and activator 1. In Dictyostelium discoideum (Social amoeba), this protein is Probable replication factor C subunit 5 (rfc5).